The sequence spans 644 residues: Neurofilament medium polypeptide (644 aa).

The tract at residues 1–33 (VKVELDKKVQSLQDEVAFLRTNHEEEVADLLAQ) is coil 1B. Residues 1 to 197 (VKVELDKKVQ…KLLEGEETRF (197 aa)) enclose the IF rod domain. Ser11 bears the Phosphoserine mark. Positions 34 to 50 (IQASHITVERKDYLKTD) are linker 12. The segment at 51 to 72 (ISSALKEIRSQLECHSDQNMHQ) is coil 2A. The interval 73–76 (AEEW) is linker 2. The coil 2B stretch occupies residues 77–197 (FKCRYAKLTE…KLLEGEETRF (121 aa)). Tyr105 carries the phosphotyrosine modification. Residues Ser131, Ser203, and Ser215 each carry the phosphoserine modification. The tail stretch occupies residues 198–643 (STFSGSITGP…HAIVKEVTQS (446 aa)). Thr217 is a glycosylation site (O-linked (GlcNAc) threonine). Phosphoserine is present on residues Ser253 and Ser269. Residues 270 to 582 (VKEEEKEEEA…GGDRSEEKVV (313 aa)) form a disordered region. The span at 274-292 (EKEEEAEGKEEEQEAEEEV) shows a compositional bias: acidic residues. Residue Ser298 is modified to Phosphoserine. The span at 308-328 (KEEEGEKEEEGQEEEEEEEDE) shows a compositional bias: acidic residues. The segment covering 329 to 350 (GVKSDQAEEGGSEKEGSSKNEG) has biased composition (basic and acidic residues). Phosphoserine occurs at positions 332, 340, 345, and 346. Residues 351-368 (EQEEGETEAEGEVEEAEA) show a composition bias toward acidic residues. Thr357 bears the Phosphothreonine mark. Positions 369–400 (KEEKKTEEKSEEVAAKEEPVTEAKVGKPEKAK) are enriched in basic and acidic residues. Ser401, Ser406, Ser442, and Ser465 each carry phosphoserine. A compositionally biased stretch (basic and acidic residues) spans 422–470 (GEQKEEEEKVEEEKKKAAKESPKEEKVEKKEEKPKDVPKKKAESPVKEE). Positions 474–483 (EAATITKPTK) are enriched in low complexity. A compositionally biased stretch (basic and acidic residues) spans 485–508 (GLEKETKEGEKPLQQEKEKEKAGE). 3 positions are modified to phosphoserine: Ser512, Ser550, and Ser566. Positions 545-557 (TKEKGSGREEEKG) are enriched in basic and acidic residues. The span at 568–582 (ADEKKGGDRSEEKVV) shows a compositional bias: basic and acidic residues.

This sequence belongs to the intermediate filament family. Forms heterodimers with NEFL; which can further hetero-oligomerize (in vitro). Forms heterodimers with INA (in vitro). Post-translationally, there are a number of repeats of the tripeptide K-S-P, NFM is phosphorylated on a number of the serines in this motif. It is thought that phosphorylation of NFM results in the formation of interfilament cross bridges that are important in the maintenance of axonal caliber. In terms of processing, phosphorylation seems to play a major role in the functioning of the larger neurofilament polypeptides (NF-M and NF-H), the levels of phosphorylation being altered developmentally and coincidentally with a change in the neurofilament function. Phosphorylated in the head and rod regions by the PKC kinase PKN1, leading to the inhibition of polymerization.

The protein localises to the cytoplasm. Its subcellular location is the cytoskeleton. It is found in the cell projection. It localises to the axon. In terms of biological role, neurofilaments usually contain three intermediate filament proteins: NEFL, NEFM, and NEFH which are involved in the maintenance of neuronal caliber. May additionally cooperate with the neuronal intermediate filament proteins PRPH and INA to form neuronal filamentous networks. The protein is Neurofilament medium polypeptide (NEFM) of Oryctolagus cuniculus (Rabbit).